Consider the following 104-residue polypeptide: Integration host factor subunit alpha (104 aa).

The protein belongs to the bacterial histone-like protein family. In terms of assembly, heterodimer of an alpha and a beta chain.

This protein is one of the two subunits of integration host factor, a specific DNA-binding protein that functions in genetic recombination as well as in transcriptional and translational control. In Bartonella quintana (strain Toulouse) (Rochalimaea quintana), this protein is Integration host factor subunit alpha.